A 225-amino-acid chain; its full sequence is NAD(P)H-quinone oxidoreductase subunit K, chloroplastic (225 aa).

Positions 43, 44, 108, and 139 each coordinate [4Fe-4S] cluster.

The protein belongs to the complex I 20 kDa subunit family. NDH is composed of at least 16 different subunits, 5 of which are encoded in the nucleus. The cofactor is [4Fe-4S] cluster.

It localises to the plastid. Its subcellular location is the chloroplast thylakoid membrane. The enzyme catalyses a plastoquinone + NADH + (n+1) H(+)(in) = a plastoquinol + NAD(+) + n H(+)(out). It catalyses the reaction a plastoquinone + NADPH + (n+1) H(+)(in) = a plastoquinol + NADP(+) + n H(+)(out). Functionally, NDH shuttles electrons from NAD(P)H:plastoquinone, via FMN and iron-sulfur (Fe-S) centers, to quinones in the photosynthetic chain and possibly in a chloroplast respiratory chain. The immediate electron acceptor for the enzyme in this species is believed to be plastoquinone. Couples the redox reaction to proton translocation, and thus conserves the redox energy in a proton gradient. In Draba nemorosa (Woodland whitlowgrass), this protein is NAD(P)H-quinone oxidoreductase subunit K, chloroplastic.